The primary structure comprises 210 residues: Transcriptional regulator GfcR (210 aa).

Residues 39 to 60 (VERSGAATEPEPRAEPEGPDDI) form a disordered region. Residues 48 to 60 (PEPRAEPEGPDDI) show a composition bias toward basic and acidic residues.

It belongs to the purine/pyrimidine phosphoribosyltransferase family. GfcR subfamily.

Interaction with effectors modulates GfcR activity. 2-keto-3-deoxy-6-phosphogluconate (KDPG), fructose-1,6-bisphosphate (FBP), 2-keto-3-deoxy-6-phosphogalactonate (KDPGal) and glycerol-3-phosphate (G3P), which are intermediates of sugar and glycerol degradation pathways, can act as inducer molecules. Functionally, DNA-binding transcriptional regulator that functions as a regulator of central sugar catabolic pathways. Is both a local regulator of specific steps in the pathways for D-glucose and D-fructose degradation and a global regulator of hexose catabolism. In the presence of D-glucose, activates expression of the gene encoding the gluconate dehydratase (gad), which is involved in D-glucose catabolism via the semiphosphorylative Entner-Doudoroff (spED) pathway. In the presence of D-fructose, activates expression of the genes encoding the PTS system EIIC component (ptfC) and the fructose-1,6-bisphosphate aldolase (fba), which are involved in D-fructose uptake and degradation via the modified Embden-Meyerhof pathway. In addition, in the presence of D-glucose, D-fructose, D-galactose or glycerol, it activates expression of the genes encoding glyceraldehyde-3-phosphate dehydrogenase (gap) and pyruvate kinase (pykA), enzymes common to all four degradation pathways. Acts by binding directly to the promoter region of the regulated genes. The chain is Transcriptional regulator GfcR from Haloferax volcanii (strain ATCC 29605 / DSM 3757 / JCM 8879 / NBRC 14742 / NCIMB 2012 / VKM B-1768 / DS2) (Halobacterium volcanii).